Here is a 159-residue protein sequence, read N- to C-terminus: MSYSITTPSQFVFLSSAWADPIELINLCTNALGNQFQTQQARTVVQRQFSEVWKPSPQVTVRFPDSDFKVYRYNAVLDPLVTALLGAFDTRNRIIEVENQANPTTAETLDATRRVDDATVAIRSAINNLVVELIRGTGSYNRSSFESSSGLVWTSGPAT.

The residue at position 2 (Ser2) is an N-acetylserine; by host.

This sequence belongs to the virgaviridae capsid protein family.

The protein localises to the virion. Capsid protein self-assembles to form rod-shaped virions about 18 nm in diameter with a central canal enclosing the viral genomic RNA. This Nicotiana tabacum (Common tobacco) protein is Capsid protein (CP).